The chain runs to 273 residues: Ribosomal RNA small subunit methyltransferase A (273 aa).

Residues asparagine 18, leucine 20, glycine 45, glutamate 66, aspartate 91, and asparagine 113 each contribute to the S-adenosyl-L-methionine site.

Belongs to the class I-like SAM-binding methyltransferase superfamily. rRNA adenine N(6)-methyltransferase family. RsmA subfamily.

The protein resides in the cytoplasm. The enzyme catalyses adenosine(1518)/adenosine(1519) in 16S rRNA + 4 S-adenosyl-L-methionine = N(6)-dimethyladenosine(1518)/N(6)-dimethyladenosine(1519) in 16S rRNA + 4 S-adenosyl-L-homocysteine + 4 H(+). Functionally, specifically dimethylates two adjacent adenosines (A1518 and A1519) in the loop of a conserved hairpin near the 3'-end of 16S rRNA in the 30S particle. May play a critical role in biogenesis of 30S subunits. The chain is Ribosomal RNA small subunit methyltransferase A from Escherichia coli O81 (strain ED1a).